Here is a 633-residue protein sequence, read N- to C-terminus: MAAQPVSRVVRRVLRAGVRSCSSGAPVTQPCPGEPVVEVLSRPRPFLGEHAAPFSAFLTDSFGRHHSYLRISLTERCNLRCQYCMPEEGVPLTPKADLLTTEEILTLARLFVKEGVDKIRLTGGEPLIRPDVVDIVAQLRQLEGLRTIGITTNGINLARLLPQLQKAGLSAINISLDTLVPAKFEFIVRRKGFHKVMEGIHKAIELGYSPVKVNCVVMRGLNEDELLDFVALTEGLPLDVRFIEYMPFDGNKWNFKKMVSYKEMLDTLRQQWPELEKLPEEESSTAKAFKIPGFRGQVSFITSMSEHFCGTCNRLRITADGNLKVCLFGNSEVSLRDHLRAGASEEELLRVIGAAVGRKKRQHAGMFNISQMKNRPMILIELFLMRQDSPPALPSTFRNSLRVQVLRHRVSFSSQMVTLWKGGGVPQAPLVAQRWLGSSLPQRHFSSHLDSDANPKCLSPTEPQAPAASSGPLPDSDQLTHVDTEGRMAMVDVGRKPDTERVAVASAVVLLGPVAFKLIQENQLKKGDALAVAQLAGIQAAKLTSQLIPLCHHVALSHVQVQLELDRTRHAAVIQASCRARGPTGVEMEALTSAAVAALALYDMCKAVSRDIVLAEIKLVSKTGGQRGDFHRT.

Residues 1–380 (MAAQPVSRVV…QMKNRPMILI (380 aa)) form a molybdenum cofactor biosynthesis protein A region. The residue at position 61 (serine 61) is a Phosphoserine. A Radical SAM core domain is found at 61-295 (SFGRHHSYLR…AKAFKIPGFR (235 aa)). A GTP-binding site is contributed by arginine 70. 2 residues coordinate [4Fe-4S] cluster: cysteine 77 and cysteine 81. Tyrosine 83 contributes to the S-adenosyl-L-methionine binding site. Cysteine 84 contributes to the [4Fe-4S] cluster binding site. Residue arginine 120 participates in GTP binding. Residue glycine 124 participates in S-adenosyl-L-methionine binding. GTP is bound at residue threonine 151. Serine 175 contributes to the S-adenosyl-L-methionine binding site. The residue at position 195 (lysine 195) is an N6-acetyllysine. A GTP-binding site is contributed by lysine 212. Methionine 246 provides a ligand contact to S-adenosyl-L-methionine. Cysteine 309 and cysteine 312 together coordinate [4Fe-4S] cluster. Position 314 to 316 (314 to 316 (RLR)) interacts with GTP. Residue cysteine 326 participates in [4Fe-4S] cluster binding. Residues 410–633 (VSFSSQMVTL…GGQRGDFHRT (224 aa)) are molybdenum cofactor biosynthesis protein C. Residues 446–480 (SSHLDSDANPKCLSPTEPQAPAASSGPLPDSDQLT) form a disordered region. Lysine 525 carries the N6-acetyllysine modification. The active-site For molybdenum cofactor biosynthesis protein C activity is aspartate 603.

The protein in the C-terminal section; belongs to the MoaC family. It in the N-terminal section; belongs to the radical SAM superfamily. MoaA family. As to quaternary structure, isoform MOCS1A and isoform MOCS1B probably form a heterooligomer. [4Fe-4S] cluster serves as cofactor.

It catalyses the reaction GTP + AH2 + S-adenosyl-L-methionine = (8S)-3',8-cyclo-7,8-dihydroguanosine 5'-triphosphate + 5'-deoxyadenosine + L-methionine + A + H(+). The catalysed reaction is (8S)-3',8-cyclo-7,8-dihydroguanosine 5'-triphosphate = cyclic pyranopterin phosphate + diphosphate. It participates in cofactor biosynthesis; molybdopterin biosynthesis. Its function is as follows. Isoform MOCS1A and isoform MOCS1B probably form a complex that catalyzes the conversion of 5'-GTP to cyclic pyranopterin monophosphate (cPMP). MOCS1A catalyzes the cyclization of GTP to (8S)-3',8-cyclo-7,8-dihydroguanosine 5'-triphosphate and MOCS1B catalyzes the subsequent conversion of (8S)-3',8-cyclo-7,8-dihydroguanosine 5'-triphosphate to cPMP. The sequence is that of Molybdenum cofactor biosynthesis protein 1 (MOCS1) from Bos taurus (Bovine).